Reading from the N-terminus, the 358-residue chain is tRNA (guanine-N(7)-)-methyltransferase (358 aa).

A disordered region spans residues 1–29; the sequence is MTPPPPKRQKRDEYRKATAEATSQSGASD. Residues glycine 99 and 122 to 123 each bind S-adenosyl-L-methionine; that span reads EI. Positions 151-186 are enriched in low complexity; that stretch reads TATAASETPSQQQAQIDGKQANANAAADAASPAPST. The segment at 151–194 is disordered; it reads TATAASETPSQQQAQIDGKQANANAAADAASPAPSTDTEHMPTT. S-adenosyl-L-methionine is bound by residues 209 to 210 and cysteine 229; that span reads NT. Residue aspartate 232 is part of the active site. Residue 330–332 coordinates S-adenosyl-L-methionine; it reads TEE.

This sequence belongs to the class I-like SAM-binding methyltransferase superfamily. TrmB family. As to quaternary structure, forms a complex with trm82.

It is found in the nucleus. It catalyses the reaction guanosine(46) in tRNA + S-adenosyl-L-methionine = N(7)-methylguanosine(46) in tRNA + S-adenosyl-L-homocysteine. It functions in the pathway tRNA modification; N(7)-methylguanine-tRNA biosynthesis. Functionally, catalyzes the formation of N(7)-methylguanine at position 46 (m7G46) in tRNA. The polypeptide is tRNA (guanine-N(7)-)-methyltransferase (trm8) (Aspergillus fumigatus (strain ATCC MYA-4609 / CBS 101355 / FGSC A1100 / Af293) (Neosartorya fumigata)).